Reading from the N-terminus, the 1752-residue chain is Gag-Pol polyprotein (1752 aa).

Gly-2 carries the N-myristoyl glycine; by host lipid modification. Residues 154 to 185 (AAQQQVLLLQREQQREQREKDIKKRDEKKKKL) are a coiled coil. The segment covering 168 to 178 (REQREKDIKKR) has biased composition (basic and acidic residues). Residues 168–222 (REQREKDIKKRDEKKKKLLPDTTQKVEQTDIGEASSSDASAQKPISTDNNPDLKV) form a disordered region. Positions 201–217 (ASSSDASAQKPISTDNN) are enriched in polar residues. The CCHC-type zinc-finger motif lies at 501-518 (NTCFFCKQPGHWKADCPN). Positions 618-694 (IPMLVDTGAC…QTFHILGRDT (77 aa)) constitute a Peptidase A2 domain. The Protease; shared with dimeric partner role is filled by Asp-623. The Reverse transcriptase domain occupies 793–977 (ENQGILIKCH…QEVVYLGQLL (185 aa)). Positions 861, 928, 929, 1231, 1269, 1290, 1360, 1493, and 1550 each coordinate Mg(2+). An RNase H type-1 domain is found at 1222 to 1368 (PDPDMTLFSD…ADEAAKNAVF (147 aa)). The Integrase catalytic domain maps to 1482-1638 (LPSRPFAHLQ…SPHEIVMGRP (157 aa)).

Homohexamer. Further associates as homomultimer. The virus core is composed of a lattice formed from hexagonal rings, each containing six capsid monomers. The protease is a homodimer, whose active site consists of two apposed aspartic acid residues. The reverse transcriptase is a monomer. Mg(2+) is required as a cofactor. Specific enzymatic cleavages by the viral protease yield mature proteins. The protease is released by autocatalytic cleavage. The polyprotein is cleaved during and after budding, this process is termed maturation.

Its subcellular location is the host cell membrane. It localises to the virion. The catalysed reaction is DNA(n) + a 2'-deoxyribonucleoside 5'-triphosphate = DNA(n+1) + diphosphate. The enzyme catalyses Endonucleolytic cleavage to 5'-phosphomonoester.. Targets Gag and gag-pol polyproteins to the plasma membrane via a multipartite membrane binding signal, that includes its myristoylated N-terminus. Also mediates nuclear localization of the pre-integration complex. Its function is as follows. Capsid protein p25 forms the spherical core of the virion that encapsulates the genomic RNA-nucleocapsid complex. Functionally, involved in the packaging and encapsidation of two copies of the genome. Binds with high affinity to conserved UCUG elements within the packaging signal, located near the 5'-end of the genome. This binding is dependent on genome dimerization. In terms of biological role, mediates proteolytic cleavages of Gag and Gag-Pol polyproteins during or shortly after the release of the virion from the plasma membrane. Cleavages take place as an ordered, step-wise cascade to yield mature proteins. This process is called maturation. Displays maximal activity during the budding process just prior to particle release from the cell. Is a multifunctional enzyme that converts the viral dimeric RNA genome into dsDNA in the cytoplasm, shortly after virus entry into the cell. This enzyme displays a DNA polymerase activity that can copy either DNA or RNA templates, and a ribonuclease H (RNase H) activity that cleaves the RNA strand of RNA-DNA heteroduplexes in a partially processive 3' to 5' endonucleasic mode. Conversion of viral genomic RNA into dsDNA requires many steps. A tRNA binds to the primer-binding site (PBS) situated at the 5' end of the viral RNA. RT uses the 3' end of the tRNA primer to perform a short round of RNA-dependent minus-strand DNA synthesis. The reading proceeds through the U5 region and ends after the repeated (R) region which is present at both ends of viral RNA. The portion of the RNA-DNA heteroduplex is digested by the RNase H, resulting in a ssDNA product attached to the tRNA primer. This ssDNA/tRNA hybridizes with the identical R region situated at the 3' end of viral RNA. This template exchange, known as minus-strand DNA strong stop transfer, can be either intra- or intermolecular. RT uses the 3' end of this newly synthesized short ssDNA to perform the RNA-dependent minus-strand DNA synthesis of the whole template. RNase H digests the RNA template except for a polypurine tract (PPT) situated at the 5' end of the genome. It is not clear if both polymerase and RNase H activities are simultaneous. RNase H probably can proceed both in a polymerase-dependent (RNA cut into small fragments by the same RT performing DNA synthesis) and a polymerase-independent mode (cleavage of remaining RNA fragments by free RTs). Secondly, RT performs DNA-directed plus-strand DNA synthesis using the PPT that has not been removed by RNase H as primers. PPT and tRNA primers are then removed by RNase H. The 3' and 5' ssDNA PBS regions hybridize to form a circular dsDNA intermediate. Strand displacement synthesis by RT to the PBS and PPT ends produces a blunt ended, linear dsDNA copy of the viral genome that includes long terminal repeats (LTRs) at both ends. Its function is as follows. Catalyzes viral DNA integration into the host chromosome, by performing a series of DNA cutting and joining reactions. This enzyme activity takes place after virion entry into a cell and reverse transcription of the RNA genome in dsDNA. The first step in the integration process is 3' processing. This step requires a complex comprising the viral genome, matrix protein and integrase. This complex is called the pre-integration complex (PIC). The integrase protein removes 2 nucleotides from each 3' end of the viral DNA, leaving recessed CA OH's at the 3' ends. In the second step that requires cell division, the PIC enters cell nucleus. In the third step, termed strand transfer, the integrase protein joins the previously processed 3' ends to the 5' ends of strands of target cellular DNA at the site of integration. The last step is viral DNA integration into host chromosome. Functionally, plays a role in budding and is processed by the viral protease during virion maturation outside the cell. This is Gag-Pol polyprotein (gag-pol) from Walleye dermal sarcoma virus (WDSV).